A 379-amino-acid chain; its full sequence is Cytochrome b (379 aa).

Transmembrane regions (helical) follow at residues 33-53 (FGSL…FLAM), 77-98 (WLIR…FIHV), 113-133 (WNIG…GYVL), and 178-198 (FFAF…VHLL). Histidine 83 and histidine 97 together coordinate heme b. Positions 182 and 196 each coordinate heme b. A ubiquinone is bound at residue histidine 201. The next 4 membrane-spanning stretches (helical) occupy residues 226 to 246 (IKDL…ALFF), 288 to 308 (LGGV…PLLN), 320 to 340 (ITQT…WIGG), and 347 to 367 (FTMI…ILXP).

It belongs to the cytochrome b family. In terms of assembly, the cytochrome bc1 complex contains 11 subunits: 3 respiratory subunits (MT-CYB, CYC1 and UQCRFS1), 2 core proteins (UQCRC1 and UQCRC2) and 6 low-molecular weight proteins (UQCRH/QCR6, UQCRB/QCR7, UQCRQ/QCR8, UQCR10/QCR9, UQCR11/QCR10 and a cleavage product of UQCRFS1). This cytochrome bc1 complex then forms a dimer. Heme b serves as cofactor.

Its subcellular location is the mitochondrion inner membrane. Component of the ubiquinol-cytochrome c reductase complex (complex III or cytochrome b-c1 complex) that is part of the mitochondrial respiratory chain. The b-c1 complex mediates electron transfer from ubiquinol to cytochrome c. Contributes to the generation of a proton gradient across the mitochondrial membrane that is then used for ATP synthesis. The polypeptide is Cytochrome b (MT-CYB) (Akodon toba (Chaco grass mouse)).